A 421-amino-acid chain; its full sequence is Elsinochrome C biosynthesis regulatory protein elcR (421 aa).

The span at 1 to 16 (MATQLPSPTATTSHSG) shows a compositional bias: polar residues. The segment at 1–20 (MATQLPSPTATTSHSGNEPR) is disordered. Positions 27–54 (CNNCSAQKIRCGKQRPACARCVNKKLQC) form a DNA-binding region, zn(2)-C6 fungal-type.

The protein resides in the nucleus. Functionally, transcription regulator of the gene cluster that mediates the biosynthesis of elsinochrome C, a perelyenequinone phytotoxin structurally similar to cercosporin. The protein is Elsinochrome C biosynthesis regulatory protein elcR of Phaeosphaeria nodorum (strain SN15 / ATCC MYA-4574 / FGSC 10173) (Glume blotch fungus).